Consider the following 92-residue polypeptide: C-C motif chemokine 3 (92 aa).

Positions 1–26 are cleaved as a signal peptide; the sequence is MQVSTAALAVLLCTVALCNRISATFA. Disulfide bonds link cysteine 33–cysteine 57 and cysteine 34–cysteine 73.

Belongs to the intercrine beta (chemokine CC) family. Self-associates. Also heterodimer of MIP-1-alpha(4-69) and MIP-1-beta(3-69). Interacts with CCR1.

Its subcellular location is the secreted. In terms of biological role, monokine with inflammatory and chemokinetic properties. Binds to CCR1, CCR4 and CCR5. One of the major HIV-suppressive factors produced by CD8+ T-cells. Recombinant MIP-1-alpha induces a dose-dependent inhibition of different strains of HIV-1, HIV-2, and simian immunodeficiency virus (SIV). This Macaca mulatta (Rhesus macaque) protein is C-C motif chemokine 3 (CCL3).